The following is a 145-amino-acid chain: Putative phosphatidylglycerol/phosphatidylinositol transfer protein DDB_G0282179 (145 aa).

Residues 1-20 form the signal peptide; sequence MIKTILLLLINFMLILIVNG. Asn-134 carries N-linked (GlcNAc...) asparagine glycosylation.

The protein belongs to the NPC2 family. In terms of assembly, monomer.

Functionally, catalyzes the intermembrane transfer of phosphatidylglycerol and phosphatidylinositol. This chain is Putative phosphatidylglycerol/phosphatidylinositol transfer protein DDB_G0282179, found in Dictyostelium discoideum (Social amoeba).